Here is a 315-residue protein sequence, read N- to C-terminus: Ferrochelatase (315 aa).

Fe cation-binding residues include H193 and E273.

It belongs to the ferrochelatase family.

It localises to the cytoplasm. The enzyme catalyses heme b + 2 H(+) = protoporphyrin IX + Fe(2+). Its pathway is porphyrin-containing compound metabolism; protoheme biosynthesis; protoheme from protoporphyrin-IX: step 1/1. Its function is as follows. Catalyzes the ferrous insertion into protoporphyrin IX. The protein is Ferrochelatase of Wolbachia sp. subsp. Drosophila simulans (strain wRi).